The primary structure comprises 940 residues: MDKIEVRGARTHNLKNINLVIPRDKLIVVTGLSGSGKSSLAFDTLYAEGQRRYVESLSAYARQFLSLMEKPDVDHIEGLSPAISIEQKSTSHNPRSTVGTITEIHDYLRLLYARVGEPRCPDHDVPLAAQTVSQMVDNVLSQPEGKRLMLLAPIIKERKGEHTKTLENLASQGYIRARIDGEVCDLSDPPKLELQKKHTIEVVVDRFKVRDDLTQRLAESFETALELSGGTAVVADMDDPKAEELLFSANFACPICGYSMRELEPRLFSFNNPAGACPTCDGLGVQQYFDPDRVIQNPELSLAGGAIRGWDRRNFYYFQMLKSLADHYKFDVEAPWGSLSANVHKVVLYGSGKENIEFKYMNDRGDTSIRRHPFEGVLHNMERRYKETESSAVREELAKFISNRPCASCEGTRLRREARHVYVENTPLPAISDMSIGHAMEFFNNLKLAGQRAKIAEKILKEIGDRLKFLVNVGLNYLTLSRSAETLSGGEAQRIRLASQIGAGLVGVMYVLDEPSIGLHQRDNERLLGTLIHLRDLGNTVIVVEHDEDAIRAADHVIDIGPGAGVHGGEVVAEGPLEAIMAVPESLTGQYMSGKRKIEVPKKRVPANPEKVLKLTGARGNNLKDVTLTLPVGLFTCITGVSGSGKSTLINDTLFPIAQRQLNGATIAEPAPYRDIQGLEHFDKVIDIDQSPIGRTPRSNPATYTGVFTPVRELFAGVPESRARGYTPGRFSFNVRGGRCEACQGDGVIKVEMHFLPDIYVPCDQCKGKRYNRETLEIKYKGKTIHEVLDMTIEEAREFFDAVPALARKLQTLMDVGLTYIRLGQSATTLSGGEAQRVKLARELSKRGTGQTLYILDEPTTGLHFADIQQLLDVLHKLRDQGNTIVVIEHNLDVIKTADWIVDLGPEGGSGGGEILVSGTPETVAECEASHTARFLKPML.

An ATP-binding site is contributed by 31 to 38; it reads GLSGSGKS. A C4-type zinc finger spans residues 253–280; the sequence is CPICGYSMRELEPRLFSFNNPAGACPTC. 2 ABC transporter domains span residues 310–587 and 607–937; these read WDRR…PESL and ANPE…RFLK. 640–647 serves as a coordination point for ATP; sequence GVSGSGKS. Residues 740 to 766 form a C4-type zinc finger; sequence CEACQGDGVIKVEMHFLPDIYVPCDQC.

This sequence belongs to the ABC transporter superfamily. UvrA family. As to quaternary structure, forms a heterotetramer with UvrB during the search for lesions.

Its subcellular location is the cytoplasm. The UvrABC repair system catalyzes the recognition and processing of DNA lesions. UvrA is an ATPase and a DNA-binding protein. A damage recognition complex composed of 2 UvrA and 2 UvrB subunits scans DNA for abnormalities. When the presence of a lesion has been verified by UvrB, the UvrA molecules dissociate. Its function is as follows. Plays a role in recovery after DNA ADP-ribosylation. The polypeptide is UvrABC system protein A (Escherichia coli O127:H6 (strain E2348/69 / EPEC)).